Reading from the N-terminus, the 267-residue chain is Thiazole synthase (267 aa).

The active-site Schiff-base intermediate with DXP is Lys-107. Residues Gly-168, Ala-194–Gly-195, and Asn-216–Thr-217 each bind 1-deoxy-D-xylulose 5-phosphate.

The protein belongs to the ThiG family. Homotetramer. Forms heterodimers with either ThiH or ThiS.

The protein resides in the cytoplasm. It carries out the reaction [ThiS sulfur-carrier protein]-C-terminal-Gly-aminoethanethioate + 2-iminoacetate + 1-deoxy-D-xylulose 5-phosphate = [ThiS sulfur-carrier protein]-C-terminal Gly-Gly + 2-[(2R,5Z)-2-carboxy-4-methylthiazol-5(2H)-ylidene]ethyl phosphate + 2 H2O + H(+). It participates in cofactor biosynthesis; thiamine diphosphate biosynthesis. Functionally, catalyzes the rearrangement of 1-deoxy-D-xylulose 5-phosphate (DXP) to produce the thiazole phosphate moiety of thiamine. Sulfur is provided by the thiocarboxylate moiety of the carrier protein ThiS. In vitro, sulfur can be provided by H(2)S. The chain is Thiazole synthase from Aquifex aeolicus (strain VF5).